The chain runs to 134 residues: Replication enhancer protein (134 aa).

The protein belongs to the geminiviridae replication enhancer protein family. Homooligomer. Interacts with the replication-associated protein (REP). Interacts with host proliferating cell nuclear antigen (PCNA). Interacts with host retinoblastoma-related protein 1 (RBR1), and may thereby deregulate the host cell cycle. Oligomerization and interaction with PCNA are necessary for optimal replication enhancement.

In terms of biological role, increases viral DNA accumulation. Enhances infectivity and symptom expression. The sequence is that of Replication enhancer protein from African cassava mosaic virus (isolate West Kenyan 844) (ACMV).